Consider the following 123-residue polypeptide: Small ribosomal subunit protein uS12 (123 aa).

Position 89 is a 3-methylthioaspartic acid (Asp89).

This sequence belongs to the universal ribosomal protein uS12 family. As to quaternary structure, part of the 30S ribosomal subunit. Contacts proteins S8 and S17. May interact with IF1 in the 30S initiation complex.

Its function is as follows. With S4 and S5 plays an important role in translational accuracy. Functionally, interacts with and stabilizes bases of the 16S rRNA that are involved in tRNA selection in the A site and with the mRNA backbone. Located at the interface of the 30S and 50S subunits, it traverses the body of the 30S subunit contacting proteins on the other side and probably holding the rRNA structure together. The combined cluster of proteins S8, S12 and S17 appears to hold together the shoulder and platform of the 30S subunit. This is Small ribosomal subunit protein uS12 from Rhizobium meliloti (strain 1021) (Ensifer meliloti).